The chain runs to 94 residues: Large ribosomal subunit protein bL28 (94 aa).

This sequence belongs to the bacterial ribosomal protein bL28 family.

The protein is Large ribosomal subunit protein bL28 of Hyphomonas neptunium (strain ATCC 15444).